A 436-amino-acid chain; its full sequence is Phosphatidylinositol transfer protein CSR1 (436 aa).

A disordered region spans residues 85 to 104; the sequence is VYDAEKVEDSDAEKEKPTPQ. A compositionally biased stretch (basic and acidic residues) spans 86–102; sequence YDAEKVEDSDAEKEKPT. Positions 188–347 constitute a CRAL-TRIO domain; the sequence is KKGIVKQLEL…ELGGKDEYNF (160 aa).

The protein belongs to the PITP family. As to quaternary structure, binds phosphatidylinositol (PtdIns).

Its subcellular location is the cytoplasm. It localises to the endosome. Non-classical phosphatidylinositol (PtdIns) transfer protein (PITP), which exhibits PtdIns-binding/transfer activity in the absence of detectable PtdCho-binding/transfer activity. May also regulate post-Golgi membrane-trafficking events and have a role resistance to oxidative stress. In Eremothecium gossypii (strain ATCC 10895 / CBS 109.51 / FGSC 9923 / NRRL Y-1056) (Yeast), this protein is Phosphatidylinositol transfer protein CSR1 (CSR1).